A 226-amino-acid polypeptide reads, in one-letter code: Large ribosomal subunit protein uL3 (226 aa).

Belongs to the universal ribosomal protein uL3 family. As to quaternary structure, part of the 50S ribosomal subunit. Forms a cluster with proteins L14 and L19.

Functionally, one of the primary rRNA binding proteins, it binds directly near the 3'-end of the 23S rRNA, where it nucleates assembly of the 50S subunit. This is Large ribosomal subunit protein uL3 from Sulfurihydrogenibium sp. (strain YO3AOP1).